The primary structure comprises 62 residues: Small ribosomal subunit protein eS27 (62 aa).

Cysteine 17, cysteine 20, cysteine 36, and cysteine 39 together coordinate Zn(2+). The C4-type zinc finger occupies 17–39 (CNDCENEQIIFGSASRKITCVVC).

Belongs to the eukaryotic ribosomal protein eS27 family. Part of the 30S ribosomal subunit. The cofactor is Zn(2+).

The chain is Small ribosomal subunit protein eS27 from Methanosarcina barkeri (strain Fusaro / DSM 804).